A 345-amino-acid polypeptide reads, in one-letter code: Ananain (345 aa).

The signal sequence occupies residues 1–24 (MTSKVQLVFLFLFLCVMWASPSAA). The propeptide at 25–122 (SCDEPSDPMM…VSFDDVDISS (98 aa)) is activation peptide. Disulfide bonds link C144-C184, C178-C217, and C273-C325. C147 is an active-site residue. C147 serves as a coordination point for E64. Active-site residues include H279 and N300.

As to expression, stem (at protein level).

The enzyme catalyses Hydrolysis of proteins with broad specificity for peptide bonds. Best reported small molecule substrate Bz-Phe-Val-Arg-|-NHMec, but broader specificity than fruit bromelain.. Strongly inhibited by chicken egg-white cystatin. Inhibited by iodoacetamide and the active-site-directed inhibitor E64 (L-trans-epoxysuccinyl-leucylamide-(4-guanido)-butane). Functionally, cysteine protease. Displays a high level of diversity in substrate specificity at the P1-P1' cleavage site. A hydrophilic P1 residue is preferred, with Gln or Arg strongly preferred. Favors an Ile/Leu residue at the P2 position of substrates, with an overall higher preference for Leu. The optimal tripeptide for cleavage is Pro-Leu-Gln, with cleavage occurring after the Gln residue. Another optimal tripeptide is Val-Leu-Arg, which may imply that a hydrophobic residue at the P3 position of substrates is preferred. The polypeptide is Ananain (Ananas comosus (Pineapple)).